A 249-amino-acid chain; its full sequence is tRNA (guanine-N(1)-)-methyltransferase (249 aa).

Residues glycine 121 and 141–146 (LGDFVL) contribute to the S-adenosyl-L-methionine site.

The protein belongs to the RNA methyltransferase TrmD family. As to quaternary structure, homodimer.

It localises to the cytoplasm. It carries out the reaction guanosine(37) in tRNA + S-adenosyl-L-methionine = N(1)-methylguanosine(37) in tRNA + S-adenosyl-L-homocysteine + H(+). Functionally, specifically methylates guanosine-37 in various tRNAs. This is tRNA (guanine-N(1)-)-methyltransferase from Cereibacter sphaeroides (strain KD131 / KCTC 12085) (Rhodobacter sphaeroides).